Here is a 296-residue protein sequence, read N- to C-terminus: Enoyl-CoA hydratase domain-containing protein 2, mitochondrial (296 aa).

Lysine 101 is subject to N6-acetyllysine; alternate. Lysine 101 is modified (N6-succinyllysine; alternate).

Belongs to the enoyl-CoA hydratase/isomerase family.

It is found in the mitochondrion. The sequence is that of Enoyl-CoA hydratase domain-containing protein 2, mitochondrial (ECHDC2) from Bos taurus (Bovine).